The primary structure comprises 107 residues: U1-lycotoxin-Ls1g (107 aa).

The first 20 residues, 1-20, serve as a signal peptide directing secretion; it reads MMKVLVVVALLVTLISYSSS. A propeptide spanning residues 21–41 is cleaved from the precursor; that stretch reads EGIDDLEADELLSLMANEQTR. Disulfide bonds link cysteine 51–cysteine 68, cysteine 58–cysteine 86, and cysteine 70–cysteine 84.

This sequence belongs to the neurotoxin 19 (CSTX) family. 04 (U1-Lctx) subfamily. Expressed by the venom gland.

Its subcellular location is the secreted. This is U1-lycotoxin-Ls1g from Lycosa singoriensis (Wolf spider).